Reading from the N-terminus, the 399-residue chain is Methylthioribose kinase (399 aa).

ATP-binding positions include Asn-40, Lys-57, and Glu-111–Leu-113. Asp-229 is a substrate binding site. Asp-246–Glu-248 contributes to the ATP binding site. Arg-344 lines the substrate pocket.

The protein belongs to the methylthioribose kinase family. In terms of assembly, homodimer.

It catalyses the reaction 5-(methylsulfanyl)-D-ribose + ATP = 5-(methylsulfanyl)-alpha-D-ribose 1-phosphate + ADP + H(+). It functions in the pathway amino-acid biosynthesis; L-methionine biosynthesis via salvage pathway; S-methyl-5-thio-alpha-D-ribose 1-phosphate from S-methyl-5'-thioadenosine (hydrolase route): step 2/2. In terms of biological role, catalyzes the phosphorylation of methylthioribose into methylthioribose-1-phosphate. The chain is Methylthioribose kinase from Yersinia enterocolitica serotype O:8 / biotype 1B (strain NCTC 13174 / 8081).